We begin with the raw amino-acid sequence, 131 residues long: Profilin-3 (131 aa).

Belongs to the profilin family. In terms of assembly, occurs in many kinds of cells as a complex with monomeric actin in a 1:1 ratio.

The protein localises to the cytoplasm. It is found in the cytoskeleton. Functionally, binds to actin and affects the structure of the cytoskeleton. At high concentrations, profilin prevents the polymerization of actin, whereas it enhances it at low concentrations. By binding to PIP2, it inhibits the formation of IP3 and DG. The sequence is that of Profilin-3 from Lilium longiflorum (Trumpet lily).